A 107-amino-acid chain; its full sequence is Iron-binding protein IscA (107 aa).

Residues C35, C99, and C101 each coordinate Fe cation.

Belongs to the HesB/IscA family. As to quaternary structure, homodimer; may form tetramers and higher multimers. Requires Fe cation as cofactor.

Is able to transfer iron-sulfur clusters to apo-ferredoxin. Multiple cycles of [2Fe2S] cluster formation and transfer are observed, suggesting that IscA acts catalytically. Recruits intracellular free iron so as to provide iron for the assembly of transient iron-sulfur cluster in IscU in the presence of IscS, L-cysteine and the thioredoxin reductase system TrxA/TrxB. The polypeptide is Iron-binding protein IscA (Xenorhabdus nematophila (strain ATCC 19061 / DSM 3370 / CCUG 14189 / LMG 1036 / NCIMB 9965 / AN6)).